The following is a 94-amino-acid chain: Large ribosomal subunit protein uL23 (94 aa).

Belongs to the universal ribosomal protein uL23 family. As to quaternary structure, part of the 50S ribosomal subunit. Contacts protein L29, and trigger factor when it is bound to the ribosome.

Functionally, one of the early assembly proteins it binds 23S rRNA. One of the proteins that surrounds the polypeptide exit tunnel on the outside of the ribosome. Forms the main docking site for trigger factor binding to the ribosome. This chain is Large ribosomal subunit protein uL23, found in Dehalococcoides mccartyi (strain ATCC BAA-2266 / KCTC 15142 / 195) (Dehalococcoides ethenogenes (strain 195)).